Reading from the N-terminus, the 225-residue chain is E3 ubiquitin-protein ligase ATL59 (225 aa).

A helical membrane pass occupies residues F22 to I42. The RING-type; atypical zinc-finger motif lies at C97–R139.

The protein belongs to the RING-type zinc finger family. ATL subfamily.

The protein resides in the membrane. It carries out the reaction S-ubiquitinyl-[E2 ubiquitin-conjugating enzyme]-L-cysteine + [acceptor protein]-L-lysine = [E2 ubiquitin-conjugating enzyme]-L-cysteine + N(6)-ubiquitinyl-[acceptor protein]-L-lysine.. It participates in protein modification; protein ubiquitination. In terms of biological role, E3 ubiquitin-protein ligase able to catalyze polyubiquitination with ubiquitin-conjugating enzyme E2 UBC8, UBC10, UBC11, and UBC34 in vitro. The chain is E3 ubiquitin-protein ligase ATL59 (ATL59) from Arabidopsis thaliana (Mouse-ear cress).